Consider the following 551-residue polypeptide: MFS-type transporter ATEG_00331 (551 aa).

A signal peptide spans 1–18 (MKAWLLVSSLCLSTFIAA). The next 4 membrane-spanning stretches (helical) occupy residues 40 to 60 (LEFTWIGTAYLLPAAASTPPW), 71 to 91 (PVLMISIVVFFIGSLIGALAI), 102 to 122 (IQGTGGGGILGLSATVIGDVF), and 132 to 152 (GVLGVTWGVACGLGPIVGGAF). N-linked (GlcNAc...) asparagine glycans are attached at residues asparagine 165 and asparagine 178. A run of 8 helical transmembrane segments spans residues 179 to 199 (LTTSVPVAGVAGALVLLFLEV), 206 to 228 (IIEGLLAMDWLGTITIVGATVMF), 233 to 255 (GYGGIAYPWNSATVVCLIVFGIG), 324 to 344 (VYLLPVAVTLCVASTATGLYI), 354 to 374 (IYFGLVMMILGHGLYINLQPY), 380 to 400 (IIIFQIIAGLGLGPLFQAPII), 417 to 437 (TVFFARDIATAMSIVFGGVIF), and 493 to 513 (SEWIFYTALSGAALLLSVFIS). A glycan (N-linked (GlcNAc...) asparagine) is linked at asparagine 524.

The protein belongs to the major facilitator superfamily. TCR/Tet family.

The protein resides in the membrane. Its function is as follows. MFS-type transporter; part of the gene cluster that mediates the biosynthesis of isoflavipucine. In Aspergillus terreus (strain NIH 2624 / FGSC A1156), this protein is MFS-type transporter ATEG_00331.